A 180-amino-acid polypeptide reads, in one-letter code: uncharacterized protein (180 aa).

Residues 1–31 (MSTYEEEHGIQQNSRDYQEVGGTSQEEQRRQ) form a disordered region. Serine 2 carries the post-translational modification N-acetylserine. An RING-type zinc finger spans residues 109–153 (CSICYTNYLEDEYPLVVELPHCHHKFDLECLSVWLSRSTTCPLCR).

This is an uncharacterized protein from Saccharomyces cerevisiae (strain ATCC 204508 / S288c) (Baker's yeast).